The following is a 227-amino-acid chain: Uracil-DNA glycosylase (227 aa).

The active-site Proton acceptor is D65.

It belongs to the uracil-DNA glycosylase (UDG) superfamily. UNG family.

The protein localises to the cytoplasm. It carries out the reaction Hydrolyzes single-stranded DNA or mismatched double-stranded DNA and polynucleotides, releasing free uracil.. Functionally, excises uracil residues from the DNA which can arise as a result of misincorporation of dUMP residues by DNA polymerase or due to deamination of cytosine. This is Uracil-DNA glycosylase from Bacillus velezensis (strain DSM 23117 / BGSC 10A6 / LMG 26770 / FZB42) (Bacillus amyloliquefaciens subsp. plantarum).